The sequence spans 92 residues: MEYQYPIDLDWSNDEMMQVVSFFNAVESYYESSVEGEKLLDRYKQFKKIVPGKAEEKQIFKEFENSSGYSSYHAVKAVQSSPDQKLFSAKSK.

It belongs to the UPF0223 family.

The protein is UPF0223 protein SSP1692 of Staphylococcus saprophyticus subsp. saprophyticus (strain ATCC 15305 / DSM 20229 / NCIMB 8711 / NCTC 7292 / S-41).